Here is a 241-residue protein sequence, read N- to C-terminus: Histone H1-II (241 aa).

Positions 1–10 (MASDAPEVKA) are enriched in basic and acidic residues. Disordered regions lie at residues 1–27 (MASD…THPP) and 89–241 (NSYK…AKKA). Basic residues predominate over residues 11-20 (PKAKTQKKPK). Residues 24–95 (THPPYIQMVT…KVKNSYKLSD (72 aa)) enclose the H15 domain. Residues 99 to 111 (SKAKAAAKPKAAP) are compositionally biased toward basic residues. 3 repeat units span residues 111–116 (PKKAAA), 117–122 (PKKAAA), and 123–128 (PKKAKA). An 8 X 6 AA repeats of P-K-K-A-[AK]-A region spans residues 111 to 217 (PKKAAAPKKA…KAATPKKAKA (107 aa)). A compositionally biased stretch (basic and acidic residues) spans 129-155 (PKKEGEKKAVKPKSEKKAAKPKTEKKP). Composition is skewed to basic residues over residues 156 to 184 (KAAK…KATP) and 194 to 241 (AAPK…AKKA). A DNA-binding region spans residues 183 to 186 (TPKK). Repeat copies occupy residues 184–189 (PKKAAA), 190–195 (PKKAAA), 196–201 (PKKAKA), 204–209 (PKKAKA), and 212–217 (PKKAKA). DNA-binding regions lie at residues 203-206 (TPKK) and 211-214 (TPKK).

It belongs to the histone H1/H5 family.

It is found in the nucleus. Its subcellular location is the chromosome. In terms of biological role, histones H1 are necessary for the condensation of nucleosome chains into higher-order structures. This is Histone H1-II (H1-II) from Volvox carteri (Green alga).